The primary structure comprises 284 residues: Sulfotransferase 4A1 (284 aa).

3 positions are modified to phosphothreonine: Thr8, Thr11, and Thr205.

The protein belongs to the sulfotransferase 1 family. As to expression, expressed in brain, cerebellum and hypothalamus. Not detected in pancreas, liver, lung, intestine, kidney, uterus, adrenal gland, thymus, spleen, epididymis, testicle, and heart.

It localises to the cytoplasm. Atypical sulfotransferase family member with very low affinity for 3'-phospho-5'-adenylyl sulfate (PAPS) and very low catalytic activity towards L-triiodothyronine, thyroxine, estrone, p-nitrophenol, 2-naphthylamine, and 2-beta-naphthol. May have a role in the metabolism of drugs and neurotransmitters in the CNS. This chain is Sulfotransferase 4A1 (Sult4a1), found in Mus musculus (Mouse).